The primary structure comprises 526 residues: Cyclin-L1 (526 aa).

Positions 1 to 36 (MASGPHSTATAAAAASSAAPSAGGSSSGTTTTTTTT) are disordered. 2 cyclin-like regions span residues 88–190 (ELIQ…RVLK) and 203–287 (KIIV…ETLR). The interval 318–526 (KGLNPDGTPA…SRSGHGRHRR (209 aa)) is disordered. Threonine 325 bears the Phosphothreonine mark. Phosphoserine occurs at positions 335 and 338. Glycyl lysine isopeptide (Lys-Gly) (interchain with G-Cter in SUMO2) cross-links involve residues lysine 339 and lysine 347. Residues 342 to 352 (SPREVKAEEKS) are compositionally biased toward basic and acidic residues. Phosphoserine is present on residues serine 352 and serine 355. Over residues 361–370 (VKKEPEDRQQ) the composition is skewed to basic and acidic residues. Lysine 362 is covalently cross-linked (Glycyl lysine isopeptide (Lys-Gly) (interchain with G-Cter in SUMO2)). Serine 374 carries the post-translational modification Phosphoserine. Composition is skewed to basic residues over residues 382–418 (DSKRSRNSRSASRSRSRTRSRSRSHTPRRHYNNRRSR), 438–452 (RRHHNHGSPHLKAKH), 460–476 (SNRHGHKRKKSRSRSQS), and 486–498 (KKHRHERGHHRDR). The RS stretch occupies residues 390-432 (RSASRSRSRTRSRSRSHTPRRHYNNRRSRSGTYSSRSRSRSRS). The residue at position 445 (serine 445) is a Phosphoserine. Residues 499 to 508 (RERSRSFERS) are compositionally biased toward basic and acidic residues. Over residues 509–526 (HKSKHHGGSRSGHGRHRR) the composition is skewed to basic residues.

It belongs to the cyclin family. Cyclin L subfamily. As to quaternary structure, (Microbial infection) Interacts with human herpes virus 1 (HHV-1) transcriptional regulator ICP22. Interacts with POLR2A via its hyperphosphorylated C-terminal domain (CTD). Interacts with CDK11A, CDK12 and CDK13. Isoforms 1 and 2, but not isoform 3, interact with CDK11B. May form a ternary complex with CDK11B and casein kinase II (CKII). Interacts with pre-mRNA-splicing factors, including at least SRSF1, SRSF2 and SRSF7/SLU7. As to expression, widely expressed. Overexpression in primary tumors of head and neck squamous cell carcinomas (HNSCC).

The protein localises to the nucleus speckle. It localises to the nucleus. The protein resides in the nucleoplasm. In terms of biological role, involved in pre-mRNA splicing. Functions in association with cyclin-dependent kinases (CDKs). Inhibited by the CDK-specific inhibitor CDKN1A/p21. May play a role in the regulation of RNA polymerase II (pol II). May be a candidate proto-oncogene in head and neck squamous cell carcinomas (HNSCC). The polypeptide is Cyclin-L1 (CCNL1) (Homo sapiens (Human)).